We begin with the raw amino-acid sequence, 166 residues long: MFHADRIIVAFDGSENSKKALLTAIDLAKTVNAAITVAHSHDMKDNQTVIDPPRPAAEASYISGGMTSVPDPLISDVTSPEPMIYEDRTEEVIAEARMMLNEQQADGDIDILEGDPAESIIEHANRISADMIVTGSRDQNRLKKLIFGSVSEKLSAKSDIPVLIVK.

The protein belongs to the universal stress protein A family.

The chain is Stress response protein NhaX (nhaX) from Bacillus subtilis (strain 168).